The primary structure comprises 468 residues: Peripherin (468 aa).

Residues Met1–Ser16 show a composition bias toward low complexity. A disordered region spans residues Met1–Gly22. Residues Met1–Gln96 form a head region. Tyr17 is subject to 3'-nitrotyrosine. Phosphoserine is present on residues Ser28, Ser50, and Ser59. In terms of domain architecture, IF rod spans Glu94 to Ile404. The coil 1A stretch occupies residues Glu97–Ala129. The segment at Arg130 to Leu140 is linker 1. The tract at residues Cys141–Leu236 is coil 1B. Residues Gln237–Thr259 form a linker 2 region. The interval Ala260 to Ser402 is coil 2. Position 376 is a 3'-nitrotyrosine (Tyr376). The segment at Arg403–Tyr468 is tail. The segment at Gly445–Tyr468 is disordered. Tyr468 carries the post-translational modification Phosphotyrosine.

Belongs to the intermediate filament family. As to quaternary structure, forms homodimers (in vitro). Homopolymerizes into a filamentous network (in vitro). Forms heterodimers with NEFL, NEFM or NEFH (in vitro). Interacts with DST (via C-terminus). Interacts with RAB7A; the interaction is direct. Interacts with PRKCE (via phorbol-ester/DAG-type 2 domain). In terms of processing, phosphorylated; phosphorylation increases after nerve injury in regenerating neurons. Expressed in hypoglossal motor neurons (at protein level). Expressed in the small and large sensory neurons of the dorsal root ganglion (at protein level). Expressed in cutaneous and muscular sensory neurons.

Its subcellular location is the cytoplasm. The protein resides in the cytoskeleton. It is found in the cell projection. It localises to the axon. The protein localises to the perikaryon. Functionally, class-III neuronal intermediate filament protein. My form an independent structural network without the involvement of other neurofilaments or may cooperate with the neuronal intermediate filament proteins NEFL, NEFH, NEFM and INA to form a filamentous network. Assembly of the neuronal intermediate filaments may be regulated by RAB7A. Plays a role in the development of unmyelinated sensory neurons. May be involved in axon elongation and axon regeneration after injury. Inhibits neurite extension in type II spiral ganglion neurons in the cochlea. The polypeptide is Peripherin (Prph) (Rattus norvegicus (Rat)).